The chain runs to 533 residues: Tyrosine decarboxylase (533 aa).

The disordered stretch occupies residues 1 to 22 (MAPPSHCHTINGGAPRNGAIPE). Residues T281 and N336 each contribute to the pyridoxal 5'-phosphate site. Residue K339 is modified to N6-(pyridoxal phosphate)lysine.

The protein belongs to the group II decarboxylase family. Requires pyridoxal 5'-phosphate as cofactor.

It catalyses the reaction L-tyrosine + H(+) = tyramine + CO2. In terms of biological role, catalyzes the decarboxylation of L-tyrosine to tyramine, which can be converted to the hydroxycinnamic acid amides feruloyltyramine and 4-coumaroyltyramine. Possesses low tryptophan decarboxylase activity. This is Tyrosine decarboxylase from Oryza sativa subsp. japonica (Rice).